The primary structure comprises 122 residues: UPF0102 protein RHECIAT_CH0000358 (122 aa).

This sequence belongs to the UPF0102 family.

This chain is UPF0102 protein RHECIAT_CH0000358, found in Rhizobium etli (strain CIAT 652).